Reading from the N-terminus, the 233-residue chain is Aspartate/glutamate leucyltransferase (233 aa).

Belongs to the R-transferase family. Bpt subfamily.

It is found in the cytoplasm. It catalyses the reaction N-terminal L-glutamyl-[protein] + L-leucyl-tRNA(Leu) = N-terminal L-leucyl-L-glutamyl-[protein] + tRNA(Leu) + H(+). The catalysed reaction is N-terminal L-aspartyl-[protein] + L-leucyl-tRNA(Leu) = N-terminal L-leucyl-L-aspartyl-[protein] + tRNA(Leu) + H(+). Its function is as follows. Functions in the N-end rule pathway of protein degradation where it conjugates Leu from its aminoacyl-tRNA to the N-termini of proteins containing an N-terminal aspartate or glutamate. The protein is Aspartate/glutamate leucyltransferase of Vibrio cholerae serotype O1 (strain ATCC 39541 / Classical Ogawa 395 / O395).